The sequence spans 711 residues: Putative membrane protein IgaA homolog (711 aa).

Met-1 is a topological domain (periplasmic). The chain crosses the membrane as a helical span at residues 2 to 22 (STIVIFLAALLACSLLAGWLI). The Cytoplasmic portion of the chain corresponds to 23–204 (KVRSRRRQLP…YALSRPRGLR (182 aa)). 2 consecutive transmembrane segments (helical) span residues 205–225 (EALLIVASFLMFFFCLITPDV) and 226–246 (FVPWLAGGALLLLGAGLWGLF). The Cytoplasmic portion of the chain corresponds to 247 to 339 (APPAKSSLRE…KNFPLQHWLR (93 aa)). The helical transmembrane segment at 340 to 360 (STIIAAGSLLVLFMLLFWIPL) threads the bilayer. Residues 361-655 (DMPLKFTLSW…IPDRSGLWRY (295 aa)) lie on the Periplasmic side of the membrane. The helical transmembrane segment at 656 to 676 (LSTTLLLLTMLGSAIYNGVQA) threads the bilayer. Over 677 to 711 (WRRYQRHRTRMMKIQAYYESCLNPQLITPSESLIE) the chain is Cytoplasmic.

This sequence belongs to the IgaA family.

The protein localises to the cell inner membrane. The polypeptide is Putative membrane protein IgaA homolog (yrfF) (Escherichia coli O157:H7).